The primary structure comprises 124 residues: MIRELLLIGVGGFFGAIFRYLISGIVPVKFGLPTGTLAVNLIGSFILGFLLYCSLFAPIPTEYKLFIGTGFCGALTTFSTFSYETFVLVDEGLLFKALLNILINVVGCLIMVYFGRVLALAIFR.

4 helical membrane passes run 6 to 26 (LLIG…SGIV), 37 to 57 (LAVN…SLFA), 69 to 89 (TGFC…FVLV), and 92 to 112 (GLLF…LIMV). Positions 73 and 76 each coordinate Na(+).

It belongs to the fluoride channel Fluc/FEX (TC 1.A.43) family.

It localises to the cell membrane. The catalysed reaction is fluoride(in) = fluoride(out). With respect to regulation, na(+) is not transported, but it plays an essential structural role and its presence is essential for fluoride channel function. Fluoride-specific ion channel. Important for reducing fluoride concentration in the cell, thus reducing its toxicity. This chain is Fluoride-specific ion channel FluC, found in Methanocaldococcus jannaschii (strain ATCC 43067 / DSM 2661 / JAL-1 / JCM 10045 / NBRC 100440) (Methanococcus jannaschii).